Reading from the N-terminus, the 218-residue chain is 3-dehydroquinate dehydratase (218 aa).

3-dehydroquinate-binding positions include 29 to 31 and Arg56; that span reads EFR. His116 serves as the catalytic Proton donor/acceptor. The active-site Schiff-base intermediate with substrate is the Lys142. Residues Arg180, Ser200, and Gln204 each coordinate 3-dehydroquinate.

It belongs to the type-I 3-dehydroquinase family. As to quaternary structure, homodimer.

The catalysed reaction is 3-dehydroquinate = 3-dehydroshikimate + H2O. It functions in the pathway metabolic intermediate biosynthesis; chorismate biosynthesis; chorismate from D-erythrose 4-phosphate and phosphoenolpyruvate: step 3/7. Its function is as follows. Involved in the third step of the chorismate pathway, which leads to the biosynthesis of aromatic amino acids. Catalyzes the cis-dehydration of 3-dehydroquinate (DHQ) and introduces the first double bond of the aromatic ring to yield 3-dehydroshikimate. This Methanococcus vannielii (strain ATCC 35089 / DSM 1224 / JCM 13029 / OCM 148 / SB) protein is 3-dehydroquinate dehydratase.